Here is a 212-residue protein sequence, read N- to C-terminus: F420-dependent NADP reductase (212 aa).

NADP(+) is bound by residues 9 to 12 (TGNL), 31 to 32 (SR), Lys36, Ile72, His76, Val98, and Ala137. A coenzyme F420-(gamma-Glu)n-binding site is contributed by Leu207.

Belongs to the F420-dependent NADP reductase family. Homodimer.

The enzyme catalyses reduced coenzyme F420-(gamma-L-Glu)(n) + NADP(+) = oxidized coenzyme F420-(gamma-L-Glu)(n) + NADPH + 2 H(+). Catalyzes the reversible reduction of NADP(+) by F420H(2). In this reaction the proS hydrogen at C5 of F420 is transferred into the proS position at C4 of NADPH. The polypeptide is F420-dependent NADP reductase (fno) (Archaeoglobus fulgidus (strain ATCC 49558 / DSM 4304 / JCM 9628 / NBRC 100126 / VC-16)).